The following is a 312-amino-acid chain: Gamma-soluble NSF attachment protein (312 aa).

A disordered region spans residues 281-312; the sequence is KKKSPATPQAKPDGVTATAADEEEDEYSGGLC. Residue S284 is modified to Phosphoserine. Phosphothreonine is present on T287. Over residues 300–312 the composition is skewed to acidic residues; the sequence is ADEEEDEYSGGLC. At S308 the chain carries Phosphoserine.

Belongs to the SNAP family. As to quaternary structure, interacts with RAB11FIP5. Interacts with VTI1A.

The protein localises to the membrane. It is found in the golgi apparatus. In terms of biological role, required for vesicular transport between the endoplasmic reticulum and the Golgi apparatus. In Homo sapiens (Human), this protein is Gamma-soluble NSF attachment protein.